Consider the following 177-residue polypeptide: Nucleoside triphosphate/diphosphate phosphatase (177 aa).

The active-site Proton donor is arginine 23. Mg(2+) is bound by residues asparagine 87, aspartate 103, aspartate 105, aspartate 107, aspartate 120, and glutamate 123.

This sequence belongs to the Ntdp family. Requires Mg(2+) as cofactor.

It catalyses the reaction a ribonucleoside 5'-triphosphate + H2O = a ribonucleoside 5'-diphosphate + phosphate + H(+). The enzyme catalyses a ribonucleoside 5'-diphosphate + H2O = a ribonucleoside 5'-phosphate + phosphate + H(+). Functionally, has nucleoside phosphatase activity towards nucleoside triphosphates and nucleoside diphosphates. This is Nucleoside triphosphate/diphosphate phosphatase from Streptococcus mutans serotype c (strain ATCC 700610 / UA159).